Consider the following 149-residue polypeptide: Large ribosomal subunit protein bL9 (149 aa).

The protein belongs to the bacterial ribosomal protein bL9 family.

Its function is as follows. Binds to the 23S rRNA. This chain is Large ribosomal subunit protein bL9, found in Clostridioides difficile (strain 630) (Peptoclostridium difficile).